We begin with the raw amino-acid sequence, 82 residues long: Penaeidin-3g (82 aa).

The first 19 residues, Met1–Gly19, serve as a signal peptide directing secretion. The residue at position 20 (Gln20) is a Pyrrolidone carboxylic acid. Cystine bridges form between Cys51–Cys66, Cys55–Cys73, and Cys67–Cys74. Ser81 is subject to Serine amide.

Belongs to the penaeidin family.

It is found in the cytoplasmic granule. In terms of biological role, antibacterial and antifungal activity. Presents chitin-binding activity. The protein is Penaeidin-3g of Penaeus vannamei (Whiteleg shrimp).